The following is a 933-amino-acid chain: Isoleucine--tRNA ligase (933 aa).

The short motif at 57–67 is the 'HIGH' region element; it reads PYANGNIHMGH. E556 serves as a coordination point for L-isoleucyl-5'-AMP. Residues 597–601 carry the 'KMSKS' region motif; that stretch reads KMSKS. K600 contacts ATP. The Zn(2+) site is built by C891, C894, C911, and C914.

Belongs to the class-I aminoacyl-tRNA synthetase family. IleS type 1 subfamily. Monomer. Zn(2+) serves as cofactor.

It is found in the cytoplasm. The enzyme catalyses tRNA(Ile) + L-isoleucine + ATP = L-isoleucyl-tRNA(Ile) + AMP + diphosphate. In terms of biological role, catalyzes the attachment of isoleucine to tRNA(Ile). As IleRS can inadvertently accommodate and process structurally similar amino acids such as valine, to avoid such errors it has two additional distinct tRNA(Ile)-dependent editing activities. One activity is designated as 'pretransfer' editing and involves the hydrolysis of activated Val-AMP. The other activity is designated 'posttransfer' editing and involves deacylation of mischarged Val-tRNA(Ile). The sequence is that of Isoleucine--tRNA ligase from Pediococcus pentosaceus (strain ATCC 25745 / CCUG 21536 / LMG 10740 / 183-1w).